The primary structure comprises 528 residues: Chaperonin GroEL, chloroplastic (528 aa).

ATP is bound by residues 29 to 32 (TLGP), 86 to 90 (DGTTT), G414, and D496.

This sequence belongs to the chaperonin (HSP60) family. As to quaternary structure, forms a cylinder of 14 subunits composed of two heptameric rings stacked back-to-back. Interacts with the co-chaperonin GroES.

The protein resides in the plastid. It localises to the chloroplast. It carries out the reaction ATP + H2O + a folded polypeptide = ADP + phosphate + an unfolded polypeptide.. Its function is as follows. Together with its co-chaperonin GroES, plays an essential role in assisting protein folding. The GroEL-GroES system forms a nano-cage that allows encapsulation of the non-native substrate proteins and provides a physical environment optimized to promote and accelerate protein folding. The chain is Chaperonin GroEL, chloroplastic from Gracilaria tenuistipitata var. liui (Red alga).